Consider the following 311-residue polypeptide: tRNA-cytidine(32) 2-sulfurtransferase (311 aa).

A PP-loop motif motif is present at residues 45–50; the sequence is SGGKDS. 3 residues coordinate [4Fe-4S] cluster: cysteine 120, cysteine 123, and cysteine 211.

This sequence belongs to the TtcA family. Homodimer. It depends on Mg(2+) as a cofactor. Requires [4Fe-4S] cluster as cofactor.

The protein localises to the cytoplasm. The enzyme catalyses cytidine(32) in tRNA + S-sulfanyl-L-cysteinyl-[cysteine desulfurase] + AH2 + ATP = 2-thiocytidine(32) in tRNA + L-cysteinyl-[cysteine desulfurase] + A + AMP + diphosphate + H(+). It participates in tRNA modification. Functionally, catalyzes the ATP-dependent 2-thiolation of cytidine in position 32 of tRNA, to form 2-thiocytidine (s(2)C32). The sulfur atoms are provided by the cysteine/cysteine desulfurase (IscS) system. This is tRNA-cytidine(32) 2-sulfurtransferase from Shewanella halifaxensis (strain HAW-EB4).